Reading from the N-terminus, the 103-residue chain is Large ribosomal subunit protein bL21 (103 aa).

It belongs to the bacterial ribosomal protein bL21 family. As to quaternary structure, part of the 50S ribosomal subunit. Contacts protein L20.

Its function is as follows. This protein binds to 23S rRNA in the presence of protein L20. This is Large ribosomal subunit protein bL21 from Polaromonas naphthalenivorans (strain CJ2).